Here is a 1202-residue protein sequence, read N- to C-terminus: DNA-directed RNA polymerase subunit beta (1202 aa).

The protein belongs to the RNA polymerase beta chain family. In terms of assembly, the RNAP catalytic core consists of 2 alpha, 1 beta, 1 beta' and 1 omega subunit. When a sigma factor is associated with the core the holoenzyme is formed, which can initiate transcription.

It catalyses the reaction RNA(n) + a ribonucleoside 5'-triphosphate = RNA(n+1) + diphosphate. Functionally, DNA-dependent RNA polymerase catalyzes the transcription of DNA into RNA using the four ribonucleoside triphosphates as substrates. This chain is DNA-directed RNA polymerase subunit beta, found in Mycoplasmopsis synoviae (strain 53) (Mycoplasma synoviae).